The sequence spans 511 residues: Coatomer subunit delta (511 aa).

Residues 168–177 (QARRDAERQG) show a composition bias toward basic and acidic residues. The interval 168–188 (QARRDAERQGKKAPGFGGFGS) is disordered. Residue serine 223 is modified to Phosphoserine. 2 positions are modified to N6-acetyllysine: lysine 233 and lysine 241. Serine 244 is modified (phosphoserine). Residues 271 to 511 (MESVHMKIEE…TFLVDKYEIL (241 aa)) form the MHD domain. An N6-acetyllysine mark is found at lysine 309 and lysine 351. Serine 493 carries the phosphoserine modification.

It belongs to the adaptor complexes medium subunit family. Delta-COP subfamily. In terms of assembly, oligomeric complex that consists of at least the alpha, beta, beta', gamma, delta, epsilon and zeta subunits. Ubiquitously expressed.

Its subcellular location is the cytoplasm. It is found in the golgi apparatus membrane. The protein localises to the cytoplasmic vesicle. The protein resides in the COPI-coated vesicle membrane. In terms of biological role, component of the coatomer, a cytosolic protein complex that binds to dilysine motifs and reversibly associates with Golgi non-clathrin-coated vesicles, which further mediate biosynthetic protein transport from the ER, via the Golgi up to the trans Golgi network. The coatomer complex is required for budding from Golgi membranes, and is essential for the retrograde Golgi-to-ER transport of dilysine-tagged proteins. In mammals, the coatomer can only be recruited by membranes associated to ADP-ribosylation factors (ARFs), which are small GTP-binding proteins; the complex also influences the Golgi structural integrity, as well as the processing, activity, and endocytic recycling of LDL receptors. The polypeptide is Coatomer subunit delta (ARCN1) (Homo sapiens (Human)).